The sequence spans 271 residues: MKLFGLIGEKLGHSLSPEIHNKVFKDNNIDGLYNLFSVKKDFENNIVESLKCLGVRGANVTIPYKEKVMNQLDIISHEAKAIGAVNTILIKDGKSYGYNTDYYGFGKMLERAKVDIEGNSFFVLGAGGAARSILKYLEDSKAKKIVLVSRDKEKVFKKFKDFNINFMSYGELEEIHEEFALINTTPCGMYPNTNSVAVSEKVIKKFKVALDIVYNPLETKFLKMAKDNGLKTVDGLFMLVGQGVKAEEIWNGIKVDKSTEENIYEELKCRF.

Residues 14 to 16 (SLS) and threonine 61 contribute to the shikimate site. Lysine 65 functions as the Proton acceptor in the catalytic mechanism. Shikimate contacts are provided by asparagine 86 and aspartate 101. Residues 125-129 (GAGGA) and isoleucine 212 contribute to the NADP(+) site. Position 214 (tyrosine 214) interacts with shikimate. An NADP(+)-binding site is contributed by glycine 235.

This sequence belongs to the shikimate dehydrogenase family. As to quaternary structure, homodimer.

The catalysed reaction is shikimate + NADP(+) = 3-dehydroshikimate + NADPH + H(+). The protein operates within metabolic intermediate biosynthesis; chorismate biosynthesis; chorismate from D-erythrose 4-phosphate and phosphoenolpyruvate: step 4/7. Functionally, involved in the biosynthesis of the chorismate, which leads to the biosynthesis of aromatic amino acids. Catalyzes the reversible NADPH linked reduction of 3-dehydroshikimate (DHSA) to yield shikimate (SA). In Clostridium perfringens (strain SM101 / Type A), this protein is Shikimate dehydrogenase (NADP(+)).